A 583-amino-acid polypeptide reads, in one-letter code: MPNTHTQHVQISEPNPVNTLSTPSKRGHRHRRSLAISGDFDFLKQPAAIVNLPPPQAAENCPSTAPTAVSSTLSPIRYNRFPCKTNEDAGTLDLPEPRFYPLSPKNNLQTPSPRFFISEEPSFSSPVKGVPDAIINLDDALKTRPRSFKSHRRSESAPPDLEVMVDKGNCAAGSNSMIKEEEDSLIEPESKNEYYEQKLPTALLSPLRPSLCVSEQAIDVDDSALNGSPTHHNHGMQNANARNSNTFNSLKIKGQKQRYYHYTKQLPLTVGCDSQSPKEQRSAASMTINQAMTPSSLAYTPSKLASTPATPVSFYDSNADINLESDNFPLKDNPRYAKDGYPKKCGNSQLNRVLDSDKRQDFSGESRRRRSGSPISHMQHRNLIDNMKGRRNSNTINSIFNYKSQHYEMPYDDMMKNENINAQSMPFSVNGVNNENSIGGVITRADDAPLQHSVVKSCTPDGKEEMNRLKSNDSNEYSKSEGQIRTNSQLSKDILMGEPGDMVDLSSFVNAQRKASNETGDLVFSLSQDDDALKTFHASNSAATSNESWCISDDALGKQAQDSEVRRKRKSKLGLFRHIFSRK.

Residues 1 to 24 (MPNTHTQHVQISEPNPVNTLSTPS) show a composition bias toward polar residues. Disordered regions lie at residues 1 to 31 (MPNT…HRHR) and 330 to 380 (LKDN…HMQH). Composition is skewed to basic and acidic residues over residues 332 to 342 (DNPRYAKDGYP) and 354 to 366 (LDSD…SGES). Phosphoserine occurs at positions 393 and 398. Residues 457 to 486 (SCTPDGKEEMNRLKSNDSNEYSKSEGQIRT) form a disordered region. The span at 461–479 (DGKEEMNRLKSNDSNEYSK) shows a compositional bias: basic and acidic residues. A phosphoserine mark is found at Ser516 and Ser552.

In terms of processing, phosphorylated by CDC28/CDK1.

Its function is as follows. Overexpression affects chitinase expression, cell separation and budding pattern, and increases trehalose accumulation and heat resistance by inhibiting protein kinase CBK1. Overexpression also suppresses temperature-induced hyperosmosensitivity and sensitivity to cell wall degrading enzymes. Overexpression of both LRE1 and PBN1 confers resistance to laminarinase. This Saccharomyces cerevisiae (strain ATCC 204508 / S288c) (Baker's yeast) protein is Laminarase-resistance protein LRE1 (LRE1).